Consider the following 285-residue polypeptide: Bifunctional protein FolD (285 aa).

Residues 165–167 (GRS) and serine 190 contribute to the NADP(+) site.

The protein belongs to the tetrahydrofolate dehydrogenase/cyclohydrolase family. In terms of assembly, homodimer.

It carries out the reaction (6R)-5,10-methylene-5,6,7,8-tetrahydrofolate + NADP(+) = (6R)-5,10-methenyltetrahydrofolate + NADPH. The catalysed reaction is (6R)-5,10-methenyltetrahydrofolate + H2O = (6R)-10-formyltetrahydrofolate + H(+). Its pathway is one-carbon metabolism; tetrahydrofolate interconversion. In terms of biological role, catalyzes the oxidation of 5,10-methylenetetrahydrofolate to 5,10-methenyltetrahydrofolate and then the hydrolysis of 5,10-methenyltetrahydrofolate to 10-formyltetrahydrofolate. The polypeptide is Bifunctional protein FolD (Staphylococcus haemolyticus (strain JCSC1435)).